A 657-amino-acid polypeptide reads, in one-letter code: UvrABC system protein B (657 aa).

Positions 23–414 constitute a Helicase ATP-binding domain; that stretch reads KSIKKGNKYQ…KENIFHQIMR (392 aa). 36-43 contributes to the ATP binding site; sequence GVTGSGKT. The short motif at 89-112 is the Beta-hairpin element; that stretch reads YYDYYQPEAYIPRTDVFIEKDSST. The region spanning 431-593 is the Helicase C-terminal domain; that stretch reads QVEILFDEAK…ITPTSVKRHI (163 aa). Residues 622–657 form the UVR domain; sequence AKLAKELRKQMLEAAKALEFEKAAAIRDEINKLRDL.

The protein belongs to the UvrB family. In terms of assembly, forms a heterotetramer with UvrA during the search for lesions. Interacts with UvrC in an incision complex.

The protein localises to the cytoplasm. Functionally, the UvrABC repair system catalyzes the recognition and processing of DNA lesions. A damage recognition complex composed of 2 UvrA and 2 UvrB subunits scans DNA for abnormalities. Upon binding of the UvrA(2)B(2) complex to a putative damaged site, the DNA wraps around one UvrB monomer. DNA wrap is dependent on ATP binding by UvrB and probably causes local melting of the DNA helix, facilitating insertion of UvrB beta-hairpin between the DNA strands. Then UvrB probes one DNA strand for the presence of a lesion. If a lesion is found the UvrA subunits dissociate and the UvrB-DNA preincision complex is formed. This complex is subsequently bound by UvrC and the second UvrB is released. If no lesion is found, the DNA wraps around the other UvrB subunit that will check the other stand for damage. This Campylobacter jejuni (strain RM1221) protein is UvrABC system protein B.